An 80-amino-acid chain; its full sequence is Small, acid-soluble spore protein Tlp (80 aa).

Over residues 34-73 the composition is skewed to basic and acidic residues; the sequence is AKESMEFATDEEKQRIQEKNARRNESIESFRSEIQDESAA. The disordered stretch occupies residues 34-80; it reads AKESMEFATDEEKQRIQEKNARRNESIESFRSEIQDESAARENGYQS.

The protein belongs to the Tlp family.

The protein resides in the spore core. This chain is Small, acid-soluble spore protein Tlp, found in Bacillus velezensis (strain DSM 23117 / BGSC 10A6 / LMG 26770 / FZB42) (Bacillus amyloliquefaciens subsp. plantarum).